The chain runs to 117 residues: UPF0231 protein HI_1724 (117 aa).

It belongs to the UPF0231 family.

This Haemophilus influenzae (strain ATCC 51907 / DSM 11121 / KW20 / Rd) protein is UPF0231 protein HI_1724.